The following is a 301-amino-acid chain: Phosphatidylglycerol--prolipoprotein diacylglyceryl transferase (301 aa).

Transmembrane regions (helical) follow at residues 17-37 (LAVR…IVVG), 59-79 (MLFY…VLFY), and 97-117 (GGMS…LFAY). Arg142 is a binding site for a 1,2-diacyl-sn-glycero-3-phospho-(1'-sn-glycerol). The next 2 membrane-spanning stretches (helical) occupy residues 230-250 (MGAI…TVEF) and 265-285 (LSMG…LLVW).

The protein belongs to the Lgt family.

The protein resides in the cell inner membrane. It catalyses the reaction L-cysteinyl-[prolipoprotein] + a 1,2-diacyl-sn-glycero-3-phospho-(1'-sn-glycerol) = an S-1,2-diacyl-sn-glyceryl-L-cysteinyl-[prolipoprotein] + sn-glycerol 1-phosphate + H(+). Its pathway is protein modification; lipoprotein biosynthesis (diacylglyceryl transfer). Catalyzes the transfer of the diacylglyceryl group from phosphatidylglycerol to the sulfhydryl group of the N-terminal cysteine of a prolipoprotein, the first step in the formation of mature lipoproteins. This chain is Phosphatidylglycerol--prolipoprotein diacylglyceryl transferase, found in Paraburkholderia phytofirmans (strain DSM 17436 / LMG 22146 / PsJN) (Burkholderia phytofirmans).